The chain runs to 422 residues: Phospho-N-acetylmuramoyl-pentapeptide-transferase (422 aa).

Transmembrane regions (helical) follow at residues 28–48 (LMAI…FINL), 71–91 (VGVP…PCLL), 95–115 (LHNI…TLGF), 136–156 (IIGQ…SPSV), 208–228 (AQAV…TAVS), 239–259 (GMAA…AYVS), 279–299 (LVIF…YNAF), 313–333 (IGGI…IPIL), and 399–419 (KITV…IITL).

Belongs to the glycosyltransferase 4 family. MraY subfamily. Requires Mg(2+) as cofactor.

The protein resides in the cell inner membrane. The catalysed reaction is UDP-N-acetyl-alpha-D-muramoyl-L-alanyl-gamma-D-glutamyl-meso-2,6-diaminopimeloyl-D-alanyl-D-alanine + di-trans,octa-cis-undecaprenyl phosphate = di-trans,octa-cis-undecaprenyl diphospho-N-acetyl-alpha-D-muramoyl-L-alanyl-D-glutamyl-meso-2,6-diaminopimeloyl-D-alanyl-D-alanine + UMP. It participates in cell wall biogenesis; peptidoglycan biosynthesis. In terms of biological role, catalyzes the initial step of the lipid cycle reactions in the biosynthesis of the cell wall peptidoglycan: transfers peptidoglycan precursor phospho-MurNAc-pentapeptide from UDP-MurNAc-pentapeptide onto the lipid carrier undecaprenyl phosphate, yielding undecaprenyl-pyrophosphoryl-MurNAc-pentapeptide, known as lipid I. The sequence is that of Phospho-N-acetylmuramoyl-pentapeptide-transferase from Phocaeicola vulgatus (strain ATCC 8482 / DSM 1447 / JCM 5826 / CCUG 4940 / NBRC 14291 / NCTC 11154) (Bacteroides vulgatus).